The following is an 84-amino-acid chain: Cell division topological specificity factor (84 aa).

Belongs to the MinE family.

In terms of biological role, prevents the cell division inhibition by proteins MinC and MinD at internal division sites while permitting inhibition at polar sites. This ensures cell division at the proper site by restricting the formation of a division septum at the midpoint of the long axis of the cell. The protein is Cell division topological specificity factor of Pseudomonas entomophila (strain L48).